Consider the following 460-residue polypeptide: Glutamyl-tRNA reductase (460 aa).

Residues Thr-48 to Arg-51, Ser-100, Glu-105 to Gln-107, and Gln-111 contribute to the substrate site. Cys-49 serves as the catalytic Nucleophile. Gly-180–Gly-185 lines the NADP(+) pocket.

It belongs to the glutamyl-tRNA reductase family. In terms of assembly, homodimer.

The enzyme catalyses (S)-4-amino-5-oxopentanoate + tRNA(Glu) + NADP(+) = L-glutamyl-tRNA(Glu) + NADPH + H(+). The protein operates within porphyrin-containing compound metabolism; protoporphyrin-IX biosynthesis; 5-aminolevulinate from L-glutamyl-tRNA(Glu): step 1/2. Its function is as follows. Catalyzes the NADPH-dependent reduction of glutamyl-tRNA(Glu) to glutamate 1-semialdehyde (GSA). The protein is Glutamyl-tRNA reductase of Methanosarcina acetivorans (strain ATCC 35395 / DSM 2834 / JCM 12185 / C2A).